The sequence spans 177 residues: ATP synthase subunit delta (177 aa).

Belongs to the ATPase delta chain family. In terms of assembly, F-type ATPases have 2 components, F(1) - the catalytic core - and F(0) - the membrane proton channel. F(1) has five subunits: alpha(3), beta(3), gamma(1), delta(1), epsilon(1). F(0) has three main subunits: a(1), b(2) and c(10-14). The alpha and beta chains form an alternating ring which encloses part of the gamma chain. F(1) is attached to F(0) by a central stalk formed by the gamma and epsilon chains, while a peripheral stalk is formed by the delta and b chains.

The protein resides in the cell inner membrane. In terms of biological role, f(1)F(0) ATP synthase produces ATP from ADP in the presence of a proton or sodium gradient. F-type ATPases consist of two structural domains, F(1) containing the extramembraneous catalytic core and F(0) containing the membrane proton channel, linked together by a central stalk and a peripheral stalk. During catalysis, ATP synthesis in the catalytic domain of F(1) is coupled via a rotary mechanism of the central stalk subunits to proton translocation. Its function is as follows. This protein is part of the stalk that links CF(0) to CF(1). It either transmits conformational changes from CF(0) to CF(1) or is implicated in proton conduction. The polypeptide is ATP synthase subunit delta (Shewanella loihica (strain ATCC BAA-1088 / PV-4)).